The sequence spans 453 residues: Ferruginol synthase (453 aa).

A helical membrane pass occupies residues 15–35; it reads LSKKYGPLMSIHLGSLYTVIV. A heme-binding site is contributed by Cys397.

The protein belongs to the cytochrome P450 family. Heme is required as a cofactor. In terms of tissue distribution, expressed in leaf glandular trichomes.

The protein localises to the membrane. The catalysed reaction is abieta-8,11,13-triene + reduced [NADPH--hemoprotein reductase] + O2 = ferruginol + oxidized [NADPH--hemoprotein reductase] + H2O + H(+). The enzyme catalyses ferruginol + reduced [NADPH--hemoprotein reductase] + O2 = 11-hydroxyferruginol + oxidized [NADPH--hemoprotein reductase] + H2O + H(+). It carries out the reaction miltiradiene + 2 reduced [NADPH--hemoprotein reductase] + 2 O2 = 11-oxomiltiradiene + 2 oxidized [NADPH--hemoprotein reductase] + 3 H2O + 2 H(+). It participates in secondary metabolite biosynthesis; terpenoid biosynthesis. Functionally, monooxygenase involved in the biosynthesis of labdane-related diterpenes natural products. Catalyzes the oxidation of abietatriene to produce ferruginol. Ferruginol is an intermediate in the biosynthesis of carnosate, a potent antioxidant. May also convert miltiradiene into 11-oxomiltiradiene. The polypeptide is Ferruginol synthase (Salvia pomifera (Apple sage)).